The following is a 2313-amino-acid chain: MKRKNKVLSILLTLLLIISTTSVNMSFAEATPSIEMVLDKTEVHVGDVITATIKVNNIRKLAGYQLNIKFDPEVLQPVDPATGEEFTDKSMPVNRVLLTNSKYGPTPVAGNDIKSGIINFATGYNNLTAYKSSGIDEHTGIIGEIGFKVLKKQNTSIRFEDTLSMPGAISGTSLFDWDAETITGYEVIQPDLIVVEAEPLKDASVALELDKTKVKVGDIITATIKIENMKNFAGYQLNIKYDPTMLEAIELETGSAIAKRTWPVTGGTVLQSDNYGKTTAVANDVGAGIINFAEAYSNLTKYRETGVAEETGIIGKIGFRVLKAGSTAIRFEDTTAMPGAIEGTYMFDWYGENIKGYSVVQPGEIVVEGEEPGEEPTEEPVPTETSVDPTPTVTEEPVPSELPDSYVIMELDKTKVKVGDIITATIKIENMKNFAGYQLNIKYDPTMLEAIELETGSAIAKRTWPVTGGTVLQSDNYGKTTAVANDVGAGIINFAEAYSNLTKYRETGVAEETGIIGKIGFRVLKAGSTAIRFEDTTAMPGAIEGTYMFDWYGENIKGYSVVQPGEIVVEGEEPGEEPTEEPVPTETSVDPTPTVTEEPVPSELPDSYVIMELDKTKVKVGDIITATIKIENMKNFAGYQLNIKYDPTMLEAIELETGSAIAKRTWPVTGGTVLQSDNYGKTTAVANDVGAGIINFAEAYSNLTKYRETGVAEETGIIGKIGFRVLKAGSTAIRFEDTTAMPGAIEGTYMFDWYGENIKGYSVVQPGEIVAEGEEPGEEPTEEPVPTETSADPTPTVTEEPVPSELPDSYVIMELDKTKVKVGDIITATIKIENMKNFAGYQLNIKYDPTMLEAIELETGSAIAKRTWPVTGGTVLQSDNYGKTTAVANDVGAGIINFAEAYSNLTKYRETGVAEETGIIGKIGFRVLKAGSTAIRFEDTTAMPGAIEGTYMFDWYGENIKGYSVVQPGEIVAEGEEPGEEPTEEPVPTETPVDPTPTVTEEPVPSELPDSYVIMELDKTKVKVGDIITATIKIENMKNFAGYQLNIKYDPTMLEAIELETGSAIAKRTWPVTGGTVLQSDNYGKTTAVANDVGAGIINFAEAYSNLTKYRETGVAEETGIIGKIGFRVLKAGSTAIRFEDTTAMPGAIEGTYMFDWYGENIKGYSVVQPGEIVAEGEEPTEEPVPTETPVDPTPTVTEEPVPSELPDSYVIMELDKTKVKEGDVIIATIRVNNIKNLAGYQIGIKYDPKVLEAFNIETGDPIDEGTWPAVGGTILKNRDYLPTGVAINNVSKGILNFAAYYVYFDDYREEGKSEDTGIIGNIGFRVLKAEDTTIRFEELESMPGSIDGTYMLDWYLNRISGYVVIQPAPIKAASDEPIPTDTPSDEPTPSDEPTPSDEPTPSDEPTPSDEPTPSETPEEPIPTDTPSDEPTPSDEPTPSDEPTPSDEPTPSDEPTPSETPEEPIPTDTPSDEPTPSDEPTPSDEPTPSDEPTPSDEPTPSETPEEPIPTDTPSDEPTPSDEPTPSDEPTPSDEPTPSDEPTPSETPEEPIPTDTPSDEPTPSDEPTPSDEPTPSDEPTPSDEPTPSDEPTPSDEPTPSETPEEPIPTDTPSDEPTPSDEPTPSDEPTPSDEPTPSDEPTPSDEPTPSDEPTPSETPEEPIPTDTPSDEPTPSDEPTPSDEPTPSDEPTPSDEPTPSETPEEPIPTDTPSDEPTPSDEPTPSDEPTPSDEPTPSDEPTPSETPEEPIPTDTPSDEPTPSDEPTPSDEPTPSDEPTPSDEPTPSETPEEPIPTDTPSDEPTPSDEPTPSDEPTPSDEPTPSDEPTPSETPEEPIPTDTPSDEPTPSDEPTPSDEPTPSDEPTPSDEPTPSETPEEPIPTDTPSDEPTPSDEPTPSDEPTPSDEPTPSDEPTPSETPEEPIPTDTPSDEPTPSDEPTPSDEPTPSDEPTPSDEPTPSDEPTPSDEPTPSETPEEPIPTDTPSDEPTPSDEPTPSDEPTPSDEPTPSDEPTPSDEPTPSDEPTPSETPEEPTPTTTPTPTPSTTPTSGSGGSGGSGGGGGGGGGTVPTSPTPTPTSKPTSTPAPTEIEEPTPSDVPGAIGGEHRAYLRGYPDGSFRPERNITRAEAAVIFAKLLGADESYGAQSASPYSDLADTHWAAWAIKFATSQGLFKGYPDGTFKPDQNITRAEFATVVLHFLTKVKGQEIMSKLATIDISNPKFDDCVGHWAQEFIEKLTSLGYISGYPDGTFKPQNYIKRSESVALINRALERGPLNGAPKLFPDVNESYWAFGDIMDGALDHSYIIEDEKEKFVKLLED.

The first 28 residues, 1-28 (MKRKNKVLSILLTLLLIISTTSVNMSFA), serve as a signal peptide directing secretion. Cohesin domains follow at residues 34–197 (IEMV…VVEA) and 205–367 (VALE…EIVV). Acidic residues predominate over residues 369–378 (GEEPGEEPTE). Residues 369 to 400 (GEEPGEEPTEEPVPTETSVDPTPTVTEEPVPS) form a disordered region. The span at 380–400 (PVPTETSVDPTPTVTEEPVPS) shows a compositional bias: low complexity. The 163-residue stretch at 407–569 (VIMELDKTKV…SVVQPGEIVV (163 aa)) folds into the Cohesin 3 domain. The segment covering 571–580 (GEEPGEEPTE) has biased composition (acidic residues). A disordered region spans residues 571–602 (GEEPGEEPTEEPVPTETSVDPTPTVTEEPVPS). Positions 582 to 602 (PVPTETSVDPTPTVTEEPVPS) are enriched in low complexity. Residues 609-771 (VIMELDKTKV…SVVQPGEIVA (163 aa)) form the Cohesin 4 domain. A compositionally biased stretch (acidic residues) spans 772 to 782 (EGEEPGEEPTE). Residues 772 to 805 (EGEEPGEEPTEEPVPTETSADPTPTVTEEPVPSE) form a disordered region. Positions 784–803 (PVPTETSADPTPTVTEEPVP) are enriched in low complexity. A Cohesin 5 domain is found at 811–973 (VIMELDKTKV…SVVQPGEIVA (163 aa)). Over residues 974–984 (EGEEPGEEPTE) the composition is skewed to acidic residues. A disordered region spans residues 974–1007 (EGEEPGEEPTEEPVPTETPVDPTPTVTEEPVPSE). A compositionally biased stretch (low complexity) spans 986–1007 (PVPTETPVDPTPTVTEEPVPSE). Positions 1013–1175 (VIMELDKTKV…SVVQPGEIVA (163 aa)) constitute a Cohesin 6 domain. Disordered stretches follow at residues 1177–1203 (GEEP…EPVP) and 1374–2111 (ASDE…PDGS). Residues 1184-1203 (PVPTETPVDPTPTVTEEPVP) are compositionally biased toward low complexity. A Cohesin 7 domain is found at 1211–1375 (VIMELDKTKV…IQPAPIKAAS (165 aa)). Over residues 1376 to 1390 (DEPIPTDTPSDEPTP) the composition is skewed to low complexity. The tract at residues 1383–2025 (TPSDEPTPSD…SDEPTPSETP (643 aa)) is approximate tandem repeats of T-P-S-D-E-P. Residues 1391-1411 (SDEPTPSDEPTPSDEPTPSDE) show a composition bias toward pro residues. A compositionally biased stretch (low complexity) spans 1423–1433 (PTDTPSDEPTP). Pro residues predominate over residues 1434 to 1454 (SDEPTPSDEPTPSDEPTPSDE). Over residues 1466–1476 (PTDTPSDEPTP) the composition is skewed to low complexity. The segment covering 1477–1497 (SDEPTPSDEPTPSDEPTPSDE) has biased composition (pro residues). The span at 1509–1519 (PTDTPSDEPTP) shows a compositional bias: low complexity. Residues 1520 to 1540 (SDEPTPSDEPTPSDEPTPSDE) are compositionally biased toward pro residues. Over residues 1552–1562 (PTDTPSDEPTP) the composition is skewed to low complexity. Residues 1563–1595 (SDEPTPSDEPTPSDEPTPSDEPTPSDEPTPSDE) are compositionally biased toward pro residues. Positions 1607–1617 (PTDTPSDEPTP) are enriched in low complexity. Over residues 1618–1650 (SDEPTPSDEPTPSDEPTPSDEPTPSDEPTPSDE) the composition is skewed to pro residues. Residues 1662–1672 (PTDTPSDEPTP) are compositionally biased toward low complexity. The segment covering 1673-1693 (SDEPTPSDEPTPSDEPTPSDE) has biased composition (pro residues). Low complexity predominate over residues 1705–1715 (PTDTPSDEPTP). The span at 1716-1736 (SDEPTPSDEPTPSDEPTPSDE) shows a compositional bias: pro residues. Over residues 1748-1758 (PTDTPSDEPTP) the composition is skewed to low complexity. The span at 1759–1779 (SDEPTPSDEPTPSDEPTPSDE) shows a compositional bias: pro residues. Residues 1791-1801 (PTDTPSDEPTP) are compositionally biased toward low complexity. Over residues 1802-1822 (SDEPTPSDEPTPSDEPTPSDE) the composition is skewed to pro residues. Over residues 1834 to 1844 (PTDTPSDEPTP) the composition is skewed to low complexity. The segment covering 1845 to 1865 (SDEPTPSDEPTPSDEPTPSDE) has biased composition (pro residues). Over residues 1877 to 1887 (PTDTPSDEPTP) the composition is skewed to low complexity. The span at 1888–1908 (SDEPTPSDEPTPSDEPTPSDE) shows a compositional bias: pro residues. Low complexity predominate over residues 1920 to 1930 (PTDTPSDEPTP). Pro residues predominate over residues 1931 to 1963 (SDEPTPSDEPTPSDEPTPSDEPTPSDEPTPSDE). Low complexity predominate over residues 1975–1985 (PTDTPSDEPTP). Pro residues-rich tracts occupy residues 1986 to 2018 (SDEP…PSDE) and 2027 to 2039 (EPTP…PTPS). The span at 2045–2062 (GSGGSGGSGGGGGGGGGT) shows a compositional bias: gly residues. 3 SLH domains span residues 2067–2140 (PTPT…YGAQ), 2141–2204 (SASP…EIMS), and 2211–2274 (ISNP…GAPK). A compositionally biased stretch (low complexity) spans 2073 to 2082 (SKPTSTPAPT).

In terms of assembly, assembled into mono-layered crystalline arrays.

It is found in the secreted. The protein localises to the cell wall. The protein resides in the S-layer. This chain is Cell surface glycoprotein 1 (olpB), found in Acetivibrio thermocellus (strain ATCC 27405 / DSM 1237 / JCM 9322 / NBRC 103400 / NCIMB 10682 / NRRL B-4536 / VPI 7372) (Clostridium thermocellum).